The primary structure comprises 710 residues: Solute carrier organic anion transporter family member 3A1 (710 aa).

Methionine 1 is subject to N-acetylmethionine. Residues 1–15 (MQGKKPGGSSGGGRS) show a composition bias toward gly residues. The interval 1–25 (MQGKKPGGSSGGGRSGELQGDEAQR) is disordered. The Cytoplasmic segment spans residues 1-40 (MQGKKPGGSSGGGRSGELQGDEAQRNKKKKKKVSCFSNIK). The helical transmembrane segment at 41–60 (IFLVSECALMLAQGTVGAYL) threads the bilayer. Topologically, residues 61-79 (VSVLTTLERRFNLQSADVG) are extracellular. A helical transmembrane segment spans residues 80–100 (VIASSFEIGNLALILFVSYFG). Residues 101 to 106 (ARGHRP) lie on the Cytoplasmic side of the membrane. A helical transmembrane segment spans residues 107 to 131 (RLIGCGGIVMALGALLSALPEFLTH). The Extracellular portion of the chain corresponds to 132 to 174 (QYKYEAGEIRWGAEGRDVCATNGSSSDEGPDPDLICRNRTATN). N-linked (GlcNAc...) asparagine glycans are attached at residues asparagine 153 and asparagine 169. Residues 175-203 (MMYLLLIGAQVLLGIGATPVQPLGVSYID) traverse the membrane as a helical segment. Topologically, residues 204-222 (DHVRRKDSSLYIGILFTML) are cytoplasmic. A helical membrane pass occupies residues 223-243 (VFGPACGFILGSFCTKIYVDA). The Extracellular segment spans residues 244-261 (VFIDTSNLDITPDDPRWI). A helical membrane pass occupies residues 262–286 (GAWWGGFLLCGALLFFSSLLMFGFP). Residues 287–344 (QSLPPHSEPGMESEQAMLPEREYERPKPSNGVLRHPLEPDSSASCFQQLRVIPKVTKH) lie on the Cytoplasmic side of the membrane. Residues 345–366 (LLSNPVFTCIVLAACMEIAVVA) form a helical membrane-spanning segment. Topologically, residues 367 to 386 (GFAAFLGKYLEQQFNLTTSS) are extracellular. Residue asparagine 381 is glycosylated (N-linked (GlcNAc...) asparagine). The helical transmembrane segment at 387–410 (ANQLLGMTAIPCACLGIFLGGLLV) threads the bilayer. Residues 411 to 414 (KKLS) are Cytoplasmic-facing. The chain crosses the membrane as a helical span at residues 415–438 (LSALGAIRMAMLVNLVSTACYVSF). Residues 439 to 539 (LFLGCDTVPV…PGCQEAFLTF (101 aa)) are Extracellular-facing. The N-linked (GlcNAc...) asparagine glycan is linked to asparagine 457. In terms of domain architecture, Kazal-like spans 465 to 513 (LDPYSPCNNNCECQTDSFTPVCGADGITYLSACFAGCNSTNLTGCACLT). 3 disulfide bridges follow: cysteine 471–cysteine 501, cysteine 477–cysteine 497, and cysteine 486–cysteine 511. N-linked (GlcNAc...) asparagine glycans are attached at residues asparagine 502, asparagine 505, and asparagine 519. A helical membrane pass occupies residues 540-562 (LCVMCVCSLIGAMAQTPSVIILI). Topologically, residues 563–571 (RTVSPELKS) are cytoplasmic. Residues 572–597 (YALGVLFLLLRLLGFIPPPLIFGAGI) form a helical membrane-spanning segment. The Extracellular segment spans residues 598-630 (DSTCLFWSTFCGEQGACVLYDNVVYRYLYVSIA). Residues 631 to 648 (IALKSFAFILYTTTWQCL) traverse the membrane as a helical segment. Residues 649–705 (RKNYKRYIKNHEGGLSTSEFLASTLTLDNLGRDPVPAHQTHRTKFIYNLEDHEWCEN) lie on the Cytoplasmic side of the membrane.

The protein belongs to the organo anion transporter (TC 2.A.60) family. As to expression, expressed in many brain regions, including frontal cortex, brain stem and cerebellum. Associated with neuronal bodies in a punctated matter. Detected at the arcuate nucleus and the choroid plexus (at protein level). Little expression, if any, in oligodendrocytes. In the cardiovascular system, detected in cardiac muscle cells and endothelial cells of aorta, coronary artery and left ventricular endocardium (at protein level). In the respiratory system, detected in alveolar epithelial cells and in mucosal epithelium of the trachea (at protein level). In the reproductive system, detected in spermatozoa, oocytes, smooth muscle cells of the ovary, epithelium of the glandula uterine, smooth muscle cells of the myometrium and epithelium of the endometrium (at protein level). In the kidney, detected in afferent and efferent arterioles, and the epithelium of distal tubules and collecting tubules (at protein level).

Its subcellular location is the basolateral cell membrane. The protein resides in the apical cell membrane. It is found in the basal cell membrane. The enzyme catalyses L-thyroxine(out) = L-thyroxine(in). It catalyses the reaction prostaglandin E1(out) = prostaglandin E1(in). The catalysed reaction is prostaglandin E2(out) = prostaglandin E2(in). It carries out the reaction prostaglandin F2alpha(out) = prostaglandin F2alpha(in). The enzyme catalyses (5Z,8Z,11Z,14Z)-eicosatetraenoate(out) = (5Z,8Z,11Z,14Z)-eicosatetraenoate(in). It catalyses the reaction taurocholate(out) = taurocholate(in). The catalysed reaction is glycocholate(out) = glycocholate(in). It carries out the reaction estrone 3-sulfate(out) = estrone 3-sulfate(in). The enzyme catalyses argipressin(out) = argipressin(in). In terms of biological role, putative organic anion antiporter with apparent broad substrate specificity. Recognizes various substrates including thyroid hormone L-thyroxine, prostanoids such as prostaglandin E1 and E2, bile acids such as taurocholate, glycolate and glycochenodeoxycholate and peptide hormones such as L-arginine vasopressin, likely operating in a tissue-specific manner. The transport mechanism, its electrogenicity and potential tissue-specific counterions remain to be elucidated. The chain is Solute carrier organic anion transporter family member 3A1 (Slco3a1) from Rattus norvegicus (Rat).